Consider the following 311-residue polypeptide: Beta-ketoacyl-[acyl-carrier-protein] synthase III (311 aa).

Residues C114 and H238 contribute to the active site. Residues 239–243 (QANIR) form an ACP-binding region. N268 is a catalytic residue.

It belongs to the thiolase-like superfamily. FabH family. As to quaternary structure, homodimer.

Its subcellular location is the cytoplasm. The enzyme catalyses malonyl-[ACP] + acetyl-CoA + H(+) = 3-oxobutanoyl-[ACP] + CO2 + CoA. The protein operates within lipid metabolism; fatty acid biosynthesis. Catalyzes the condensation reaction of fatty acid synthesis by the addition to an acyl acceptor of two carbons from malonyl-ACP. Catalyzes the first condensation reaction which initiates fatty acid synthesis and may therefore play a role in governing the total rate of fatty acid production. Possesses both acetoacetyl-ACP synthase and acetyl transacylase activities. Its substrate specificity determines the biosynthesis of branched-chain and/or straight-chain of fatty acids. The protein is Beta-ketoacyl-[acyl-carrier-protein] synthase III of Neorickettsia sennetsu (strain ATCC VR-367 / Miyayama) (Ehrlichia sennetsu).